The sequence spans 53 residues: Dihydrolipoyl dehydrogenase (53 aa).

Residues 35-44 and Lys53 each bind FAD; that span reads EKYPTFGGTC. Residues Cys44 and Cys49 are joined by a disulfide bond.

This sequence belongs to the class-I pyridine nucleotide-disulfide oxidoreductase family. As to quaternary structure, homodimer. The cofactor is FAD.

It is found in the mitochondrion. It catalyses the reaction N(6)-[(R)-dihydrolipoyl]-L-lysyl-[protein] + NAD(+) = N(6)-[(R)-lipoyl]-L-lysyl-[protein] + NADH + H(+). Its activity is regulated as follows. Lipoamide reduction and the NADH -&gt; NAD reaction are both completely inhibited by copper and cadmium ions. In terms of biological role, lipoamide dehydrogenase is a component of the glycine cleavage system as well as of the alpha-ketoacid dehydrogenase complexes. This enzyme has lipoamide dehydrogenase activity and NADH -&gt; NAD transhydrogenation activity. Also displays some NADH-ferricyanide reductase and NADPH -&gt; NAD transydrogenation activities. This Hymenolepis diminuta (Rat tapeworm) protein is Dihydrolipoyl dehydrogenase.